Reading from the N-terminus, the 321-residue chain is CRISPR system ring nuclease SSO1393 (321 aa).

Belongs to the cOA ring nuclease family. As to quaternary structure, homodimer. Does not require a metal cofactor. serves as cofactor.

The protein resides in the cytoplasm. It carries out the reaction cyclic tetraadenylate = 2 5'-hydroxy-diadenylate 2',3'-cylic phosphate. Functionally, CRISPR (clustered regularly interspaced short palindromic repeat) is an adaptive immune system that provides protection against mobile genetic elements (viruses, transposable elements and conjugative plasmids). CRISPR clusters contain spacers, sequences complementary to antecedent mobile elements, and target invading nucleic acids. CRISPR clusters are transcribed and processed into CRISPR RNA (crRNA). A nuclease that degrades cyclic oligoadenylates (cOA), second messengers that induce an antiviral state important for defense against invading nucleic acids. Destruction of cOA deactivates the Csx1 ribonuclease, preventing uncontrolled degradation of cellular RNA. Slowly degrades cA4 (a tetraadenylate ring) into first a linear tetraadenylate product and secondly into a linear diadenylate product with 5'-OH and 2',3'-cyclic phosphate termini. Is 10-fold less active than SSO2081, suggesting it plays a minor role in cA4 degradation. There may be 2 active sites per homodimer. This Saccharolobus solfataricus (strain ATCC 35092 / DSM 1617 / JCM 11322 / P2) (Sulfolobus solfataricus) protein is CRISPR system ring nuclease SSO1393.